Reading from the N-terminus, the 236-residue chain is Protein-S-isoprenylcysteine O-methyltransferase (236 aa).

Helical transmembrane passes span 3 to 23 (NLHT…LGCV), 24 to 44 (FGLG…FFAF), 76 to 96 (AYWL…GKSF), and 108 to 128 (FLIN…LCLG). S-adenosyl-L-methionine-binding positions include 155–158 (HLLV), Tyr163, and 168–171 (HPSY). The helical transmembrane segment at 174–194 (FFIWALGTQMLLGNFVSTLLF) threads the bilayer. Arg205 contacts substrate. Residue Glu209 participates in S-adenosyl-L-methionine binding.

Belongs to the class VI-like SAM-binding methyltransferase superfamily. Isoprenylcysteine carboxyl methyltransferase family.

It localises to the membrane. The catalysed reaction is [protein]-C-terminal S-[(2E,6E)-farnesyl]-L-cysteine + S-adenosyl-L-methionine = [protein]-C-terminal S-[(2E,6E)-farnesyl]-L-cysteine methyl ester + S-adenosyl-L-homocysteine. Functionally, mediates C-terminal methylation of the isoprenylated C-terminal cysteine in M-factor. The protein is Protein-S-isoprenylcysteine O-methyltransferase (mam4) of Schizosaccharomyces pombe (strain 972 / ATCC 24843) (Fission yeast).